The primary structure comprises 361 residues: 3-dehydroquinate synthase (361 aa).

Residues 72–77, 130–131, lysine 142, and lysine 151 contribute to the NAD(+) site; these read SGEKEK and TT. Zn(2+) contacts are provided by glutamate 184, histidine 247, and histidine 264.

It belongs to the sugar phosphate cyclases superfamily. Dehydroquinate synthase family. NAD(+) serves as cofactor. The cofactor is Co(2+). It depends on Zn(2+) as a cofactor.

Its subcellular location is the cytoplasm. The catalysed reaction is 7-phospho-2-dehydro-3-deoxy-D-arabino-heptonate = 3-dehydroquinate + phosphate. Its pathway is metabolic intermediate biosynthesis; chorismate biosynthesis; chorismate from D-erythrose 4-phosphate and phosphoenolpyruvate: step 2/7. In terms of biological role, catalyzes the conversion of 3-deoxy-D-arabino-heptulosonate 7-phosphate (DAHP) to dehydroquinate (DHQ). The polypeptide is 3-dehydroquinate synthase (Bacillus cereus (strain ATCC 14579 / DSM 31 / CCUG 7414 / JCM 2152 / NBRC 15305 / NCIMB 9373 / NCTC 2599 / NRRL B-3711)).